The following is a 107-amino-acid chain: Histone H4 (107 aa).

The segment covering 1-16 (MPGRGKGGKGGKGYGK) has biased composition (gly residues). The disordered stretch occupies residues 1–23 (MPGRGKGGKGGKGYGKVGAKRHA). A DNA-binding region spans residues 17–21 (VGAKR).

This sequence belongs to the histone H4 family. In terms of assembly, the nucleosome is a histone octamer containing two molecules each of H2A, H2B, H3 and H4 assembled in one H3-H4 heterotetramer and two H2A-H2B heterodimers. The octamer wraps approximately 147 bp of DNA.

The protein resides in the nucleus. The protein localises to the chromosome. Functionally, core component of nucleosome. Nucleosomes wrap and compact DNA into chromatin, limiting DNA accessibility to the cellular machineries which require DNA as a template. Histones thereby play a central role in transcription regulation, DNA repair, DNA replication and chromosomal stability. DNA accessibility is regulated via a complex set of post-translational modifications of histones, also called histone code, and nucleosome remodeling. This chain is Histone H4, found in Euplotes crassus.